Consider the following 202-residue polypeptide: Large ribosomal subunit protein uL4 (202 aa).

Polar residues predominate over residues G42–V52. Positions G42–G70 are disordered.

This sequence belongs to the universal ribosomal protein uL4 family. As to quaternary structure, part of the 50S ribosomal subunit.

One of the primary rRNA binding proteins, this protein initially binds near the 5'-end of the 23S rRNA. It is important during the early stages of 50S assembly. It makes multiple contacts with different domains of the 23S rRNA in the assembled 50S subunit and ribosome. Its function is as follows. Forms part of the polypeptide exit tunnel. The protein is Large ribosomal subunit protein uL4 of Xylella fastidiosa (strain 9a5c).